A 345-amino-acid polypeptide reads, in one-letter code: GTPase Obg (345 aa).

In terms of domain architecture, Obg spans 1-158; it reads MFIDSVKITL…RLVRLELKLI (158 aa). The OBG-type G domain maps to 159–339; that stretch reads ADVGLVGFPN…LKFMLLEEIK (181 aa). GTP-binding positions include 165–172, 190–194, 212–215, 280–283, and 320–322; these read GFPNVGKS, FTTLT, DIPG, SKSD, and SSL. Mg(2+)-binding residues include serine 172 and threonine 192.

The protein belongs to the TRAFAC class OBG-HflX-like GTPase superfamily. OBG GTPase family. Monomer. Mg(2+) serves as cofactor.

It is found in the cytoplasm. Functionally, an essential GTPase which binds GTP, GDP and possibly (p)ppGpp with moderate affinity, with high nucleotide exchange rates and a fairly low GTP hydrolysis rate. Plays a role in control of the cell cycle, stress response, ribosome biogenesis and in those bacteria that undergo differentiation, in morphogenesis control. This is GTPase Obg from Campylobacter jejuni subsp. jejuni serotype O:6 (strain 81116 / NCTC 11828).